Consider the following 502-residue polypeptide: 1-aminocyclopropane-1-carboxylate synthase-like protein 1 (502 aa).

Positions 15–35 are disordered; it reads CPGSDSIQDLPSNKGDGLERE. Residue glutamate 106 coordinates substrate. Lysine 324 is subject to N6-(pyridoxal phosphate)lysine.

Belongs to the class-I pyridoxal-phosphate-dependent aminotransferase family.

Does not catalyze the synthesis of 1-aminocyclopropane-1-carboxylate but is capable of catalyzing the deamination of L-vinylglycine. In Bos taurus (Bovine), this protein is 1-aminocyclopropane-1-carboxylate synthase-like protein 1 (ACCS).